Here is a 120-residue protein sequence, read N- to C-terminus: Ribosome-binding factor A (120 aa).

Belongs to the RbfA family. In terms of assembly, monomer. Binds 30S ribosomal subunits, but not 50S ribosomal subunits or 70S ribosomes.

It localises to the cytoplasm. Its function is as follows. One of several proteins that assist in the late maturation steps of the functional core of the 30S ribosomal subunit. Associates with free 30S ribosomal subunits (but not with 30S subunits that are part of 70S ribosomes or polysomes). Required for efficient processing of 16S rRNA. May interact with the 5'-terminal helix region of 16S rRNA. The polypeptide is Ribosome-binding factor A (Rickettsia rickettsii (strain Iowa)).